The primary structure comprises 432 residues: Uracil permease (432 aa).

12 helical membrane passes run Leu-25–Ile-45, Val-65–Ala-85, Gly-89–Ile-109, Val-124–Met-144, Leu-155–Ala-175, Leu-181–Val-201, Val-206–Val-226, Val-228–Ile-248, Val-305–Gly-325, Leu-330–Ile-350, Asn-370–Ser-390, and Phe-393–Pro-413.

The protein belongs to the nucleobase:cation symporter-2 (NCS2) (TC 2.A.40) family.

It localises to the cell membrane. Transport of uracil in the cell. This is Uracil permease (pyrP) from Bacillus caldolyticus.